Here is a 127-residue protein sequence, read N- to C-terminus: Small ribosomal subunit protein bS6 (127 aa).

Positions 104-127 (QGAEKGKSSRKEKVAAEAEASEEA) are disordered. Residues 107-119 (EKGKSSRKEKVAA) are compositionally biased toward basic and acidic residues.

This sequence belongs to the bacterial ribosomal protein bS6 family.

Functionally, binds together with bS18 to 16S ribosomal RNA. This is Small ribosomal subunit protein bS6 from Coxiella burnetii (strain CbuG_Q212) (Coxiella burnetii (strain Q212)).